A 488-amino-acid chain; its full sequence is Cytochrome P450 monooxygenase orf2 (488 aa).

A helical membrane pass occupies residues 7-27 (LPGIFLPLAGCVLALSLTTIV). Position 432 (cysteine 432) interacts with heme.

This sequence belongs to the cytochrome P450 family. Requires heme as cofactor.

Its subcellular location is the membrane. The protein operates within secondary metabolite biosynthesis. Cytochrome P450 monooxygenase; part of the gene cluster that mediates the biosynthesis of nigerpyrone and its derivatives carbonarone A and pestalamide A. The biosynthesis pathway begins with the polyketide assembly by epaA to form phenylacetyl triketide precursor from successive condensation of two malonyl-CoA, presumably with one phenylacetyl-CoA starter unit produced by the phenylacetyl-CoA ligase epaB. For the nigerpyrone biosynthesis, the reactive polyketide chain is released as an aldehyde through the R-domain. A nonenzymatic cyclization and dehydration may create nigerpyrone. For the biosynthesis of carbonarone A and pestalamide A, an extra methyl group is added through the C-methyltransferase domain. Several further steps involving the dehydrogenase orf1, the cytochrome P450 monooxygenase orf2 and the FAD-dependent monooxygenase orf3 are required to form a carbonarone A precursor which is converted to carbonarone A via cyclization. The O-acetyltransferase epaC could catalyze the transfer of 2-methylsuccinyl-CoA, a common intermediate in the ethylmalonyl-CoA pathway, to generate the final product pestalamide A. This is Cytochrome P450 monooxygenase orf2 from Aspergillus niger (strain ATCC MYA-4892 / CBS 513.88 / FGSC A1513).